The primary structure comprises 222 residues: 7-cyano-7-deazaguanine synthase (222 aa).

An ATP-binding site is contributed by 8–18 (LSGGLDSTTCL). The Zn(2+) site is built by Cys186, Cys194, Cys197, and Cys200.

Belongs to the QueC family. In terms of assembly, homodimer. Zn(2+) serves as cofactor.

It carries out the reaction 7-carboxy-7-deazaguanine + NH4(+) + ATP = 7-cyano-7-deazaguanine + ADP + phosphate + H2O + H(+). It functions in the pathway purine metabolism; 7-cyano-7-deazaguanine biosynthesis. Its function is as follows. Catalyzes the ATP-dependent conversion of 7-carboxy-7-deazaguanine (CDG) to 7-cyano-7-deazaguanine (preQ(0)). In Acetivibrio thermocellus (strain ATCC 27405 / DSM 1237 / JCM 9322 / NBRC 103400 / NCIMB 10682 / NRRL B-4536 / VPI 7372) (Clostridium thermocellum), this protein is 7-cyano-7-deazaguanine synthase.